A 301-amino-acid chain; its full sequence is Rhodopsin (301 aa).

At Leu-1–Met-18 the chain is on the extracellular side. A helical transmembrane segment spans residues Tyr-19 to Val-43. The Cytoplasmic portion of the chain corresponds to Phe-44–Asn-55. The helical transmembrane segment at Leu-56–Ile-78 threads the bilayer. At Thr-79–Cys-92 the chain is on the extracellular side. Cys-92 and Cys-169 are joined by a disulfide. A helical transmembrane segment spans residues Gln-93–Phe-115. Residues Asp-116–Tyr-118 carry the 'Ionic lock' involved in activated form stabilization motif. At Asp-116 to Lys-134 the chain is on the cytoplasmic side. Residues Ala-135–Phe-155 form a helical membrane-spanning segment. Residues Gly-156–Ser-182 are Extracellular-facing. A glycan (N-linked (GlcNAc...) asparagine) is linked at Asn-165. The helical transmembrane segment at Tyr-183–Val-204 threads the bilayer. Topologically, residues Val-205–Lys-245 are cytoplasmic. Residues Ile-246–Val-267 form a helical membrane-spanning segment. Over Gly-268–Val-278 the chain is Extracellular. A helical membrane pass occupies residues Tyr-279 to Ile-300. Residue Lys-288 is modified to N6-(retinylidene)lysine.

Belongs to the G-protein coupled receptor 1 family. Opsin subfamily. As to quaternary structure, homodimer. Interacts with GNAQ. Post-translationally, contains one covalently linked retinal chromophore.

Its subcellular location is the cell projection. It is found in the rhabdomere membrane. Photoreceptor required for image-forming vision at low light intensity. Can use both retinal and 3-dehydroretinal as visual pigment. Light-induced isomerization of 11-cis to all-trans retinal triggers a conformational change that activates signaling via G-proteins. Signaling via GNAQ probably mediates the activation of phospholipase C. The chain is Rhodopsin (RHO) from Orconectes australis (Southern cave crayfish).